The following is a 337-amino-acid chain: CMRF35-like molecule 1 (337 aa).

Positions 1-19 are cleaved as a signal peptide; that stretch reads MHLSLLVPFLFWITGCCTA. The Ig-like V-type domain maps to 20–125; sequence EDPVTGPEEV…LDPMFKVTVN (106 aa). The Extracellular segment spans residues 20–193; it reads EDPVTGPEEV…GVGDGFLDLS (174 aa). The segment at 39-45 is plays an important role in murine norovirus (MNV) binding; the sequence is VQCRYTS. 2 disulfide bridges follow: Cys41–Cys109 and Cys55–Cys63. The chain crosses the membrane as a helical span at residues 194–214; sequence VLLPVISAVLLLLLLVASLFA. Residues 215 to 337 are Cytoplasmic-facing; that stretch reads WRMVRRQKKA…IRRPLPAAMP (123 aa). Disordered regions lie at residues 248–270 and 318–337; these read QPRT…GKDH and LEEE…AAMP. A compositionally biased stretch (low complexity) spans 252 to 266; the sequence is SPGSSWKKGSSMSSS.

This sequence belongs to the CD300 family. As to quaternary structure, interacts with PTPN6/SHP-1 in a tyrosine phosphorylation dependent manner. Interacts with IL4R. In terms of processing, phosphorylated on tyrosine. As to expression, expressed in myeloid cells. Present on the surface of macrophages (at protein level). Highly expressed by alveolar, splenic macrophages and bone marrow-derived dendritic cells. Expression is increased following aeroallergen challenge in macrophages, mast cells, and eosinophils.

It localises to the cell membrane. Acts as an inhibitory receptor for myeloid cells and mast cells. Positively regulates the phagocytosis of apoptotic cells (efferocytosis) via phosphatidylserine (PS) recognition; recognizes and binds PS as a ligand which is expressed on the surface of apoptotic cells. Plays an important role in the maintenance of immune homeostasis, by promoting macrophage-mediated efferocytosis and by inhibiting dendritic cell-mediated efferocytosis. Negatively regulates Fc epsilon receptor-dependent mast cell activation and allergic responses via binding to ceramide which acts as a ligand. May act as a coreceptor for interleukin 4 (IL-4). Associates with and regulates IL-4 receptor alpha-mediated responses by augmenting IL-4- and IL-13-induced signaling. Negatively regulates the Toll-like receptor (TLR) signaling mediated by MYD88 and TRIF through activation of PTPN6/SHP-1 and PTPN11/SHP-2. Inhibits osteoclast formation. Induces macrophage cell death upon engagement. Functionally, (Microbial infection) Acts as a functional receptor for murine norovirus (MNV). Mediates binding to the cell surface and is both necessary and sufficient for viral entry and replication. This interaction requires Mg(2+) and Ca(2+) and is enhanced by bile acids. Primary determinant of MNV species tropism and is sufficient to render cells permissive to infection by MNV. Can render nonmurine mammalian cells susceptible to MNV infection. This is CMRF35-like molecule 1 (Cd300lf) from Mus musculus (Mouse).